The chain runs to 883 residues: Serine/threonine-protein phosphatase BSL1 homolog (883 aa).

Kelch repeat units follow at residues 64–113 (ASSG…AVGT), 221–271 (MLLL…VFVG), 273–323 (RLHV…DHDA), and 341–387 (QIYI…NRNH). Disordered stretches follow at residues 381–402 (ENQN…STDK), 430–466 (SHAS…SLEP), and 499–525 (NESR…QRSP). Positions 385 to 399 (RNHNFNSDSPTTNNS) are enriched in polar residues. 4 residues coordinate Mn(2+): D586, H588, D620, and N652. H653 functions as the Proton donor in the catalytic mechanism. 2 residues coordinate Mn(2+): H705 and H784. The segment at 861–883 (QRPPTPTRGRPQSASDRNSLAYI) is disordered. Residues 872-883 (QSASDRNSLAYI) are compositionally biased toward polar residues.

It belongs to the PPP phosphatase family. BSU subfamily. In terms of assembly, interacts with the phosphorylated form of BSK3. Requires Mn(2+) as cofactor.

It is found in the nucleus. It catalyses the reaction O-phospho-L-seryl-[protein] + H2O = L-seryl-[protein] + phosphate. It carries out the reaction O-phospho-L-threonyl-[protein] + H2O = L-threonyl-[protein] + phosphate. This chain is Serine/threonine-protein phosphatase BSL1 homolog (BSL1), found in Oryza sativa subsp. japonica (Rice).